Reading from the N-terminus, the 109-residue chain is Resistin (109 aa).

The N-terminal stretch at 1-18 (MKALSFLFIPVLGLLVCG) is a signal peptide. 5 disulfides stabilise this stretch: Cys-51-Cys-104, Cys-63-Cys-103, Cys-72-Cys-89, Cys-74-Cys-91, and Cys-78-Cys-93.

It belongs to the resistin/FIZZ family. As to quaternary structure, homodimer; disulfide-linked.

Its subcellular location is the secreted. In terms of biological role, hormone that seems to suppress insulin ability to stimulate glucose uptake into adipose cells. Potentially links obesity to diabetes. The polypeptide is Resistin (RETN) (Bos taurus (Bovine)).